An 833-amino-acid chain; its full sequence is Zinc transporter ZIP10 (833 aa).

A signal peptide spans 1 to 25 (MKVHIHTKFCLICLLTFIFHHCNHC). Residues 30–48 (DHGPEELHRHHRGMTESES) are compositionally biased toward basic and acidic residues. 2 disordered regions span residues 30–54 (DHGP…FSVQ) and 137–167 (AENH…IKAD). Positions 137 to 147 (AENHTTTSVTS) are enriched in polar residues. Residues 152-167 (KCDPEKEAAELPIKAD) show a composition bias toward basic and acidic residues. 2 N-linked (GlcNAc...) asparagine glycosylation sites follow: Asn-191 and Asn-198. A compositionally biased stretch (basic and acidic residues) spans 200 to 209 (SVAHSEHGEP). Disordered regions lie at residues 200–257 (SVAH…NHDH) and 271–335 (RVHS…EDDR). A glycan (N-linked (GlcNAc...) asparagine) is linked at Asn-218. A compositionally biased stretch (basic residues) spans 229 to 241 (VKVRRKEKGKRKK). Basic and acidic residues-rich tracts occupy residues 281-315 (HLPE…EAPH) and 326-335 (SHKDQSEDDR). Asn-341 carries an N-linked (GlcNAc...) asparagine glycan. 2 consecutive transmembrane segments (helical) span residues 413 to 433 (IISI…VPII) and 440 to 460 (FLLT…ALLH). The tract at residues 466–485 (QGGHDHSHQHTHGHGHSHGH) is disordered. Residues 497-517 (VLKGLVALGGIYLLFIIEHCI) traverse the membrane as a helical segment. Thr-538 and Thr-555 each carry phosphothreonine. Residue Ser-593 is modified to Phosphoserine. 4 helical membrane-spanning segments follow: residues 689-709 (AIGA…IAVF), 734-754 (IVYN…GTAV), 761-781 (ITLW…LVDM), and 803-823 (FILQ…IALY).

This sequence belongs to the ZIP transporter (TC 2.A.5) family. As to quaternary structure, interacts with SLC39A6. This interaction triggers cells to undergo EMT and mitosis. Found in a complex with SLC39A6, SLC39A10 and with the 'Ser-727' phosphorylated form of STAT3 throughout mitosis. Found in a complex with SLC39A6, SLC39A10 and with NCAM1; this complex controls NCAM1 phosphorylation and integration into focal adhesion complexes during epithelial-tomesenchymal transition. Found in a complex with SLC39A6, SLC39A10 and with GSK3B that controls NCAM1 phosphorylation. In terms of processing, undergoes N-terminal ectodomain shedding. Expressed in the liver, kidney and brain.

It localises to the cell membrane. The protein localises to the apical cell membrane. It catalyses the reaction Zn(2+)(in) = Zn(2+)(out). In terms of biological role, zinc-influx transporter. When associated with SLC39A6, the heterodimer formed by SLC39A10 and SLC39A6 mediates cellular zinc uptake to trigger cells to undergo epithelial-to-mesenchymal transition (EMT). mediates cellular zinc uptake to trigger cells to undergo epithelial-to-mesenchymal transition (EMT). SLC39A10-SLC39A6 heterodimers play also an essentiel role in initiating mitosis by importing zinc into cells to initiate a pathway resulting in the onset of mitosis. Plays an important for both mature B-cell maintenance and humoral immune responses. When associated with SLC39A10, the heterodimer controls NCAM1 phosphorylation and integration into focal adhesion complexes during EMT. The chain is Zinc transporter ZIP10 from Mus musculus (Mouse).